Consider the following 931-residue polypeptide: Netrin receptor UNC5C (931 aa).

An N-terminal signal peptide occupies residues 1 to 39 (MGKGLEGTAARCGLGMGYLLHSVVLPALAVLGASRPGSA). Residues 40 to 380 (AQDDDFFHEL…APDSDDVALY (341 aa)) are Extracellular-facing. Residues 62-159 (PHFLIEPEEA…AGTTKSRKAY (98 aa)) enclose the Ig-like domain. Intrachain disulfides connect Cys83/Cys144, Cys95/Cys142, Cys188/Cys239, Cys272/Cys309, Cys276/Cys313, Cys287/Cys299, Cys328/Cys362, Cys332/Cys367, and Cys340/Cys352. One can recognise an Ig-like C2-type domain in the interval 161-256 (RIAYLRKTFE…KRKSTTATVI (96 aa)). A glycan (N-linked (GlcNAc...) asparagine) is linked at Asn236. 2 TSP type-1 domains span residues 260-314 (NGGW…TLCP) and 316-368 (DGKW…GLCM). A glycan (N-linked (GlcNAc...) asparagine) is linked at Asn361. A helical membrane pass occupies residues 381–401 (VGIVIAVIVCLAISVVVALFV). Residues 402–931 (YRKNHRDFES…VVSLAAEGNY (530 aa)) lie on the Cytoplasmic side of the membrane. In terms of domain architecture, ZU5 spans 530 to 664 (CTAFGTFNSL…EACHILTETL (135 aa)). In terms of domain architecture, Death spans 850–929 (QKLCSSLDAP…ETVVSLAAEG (80 aa)).

The protein belongs to the unc-5 family. In terms of tissue distribution, restricted to proprioceptive neurons.

The protein resides in the cell membrane. The protein localises to the cell surface. It localises to the synapse. Its subcellular location is the synaptosome. It is found in the cell projection. The protein resides in the axon. The protein localises to the dendrite. It localises to the growth cone. Its subcellular location is the lamellipodium. It is found in the filopodium. Functionally, receptor for netrin required for axon guidance. Mediates axon repulsion of neuronal growth cones in the developing nervous system upon ligand binding. Involved in dorsal root ganglion axon projection towards the spinal cord. This is Netrin receptor UNC5C (UNC5C) from Gallus gallus (Chicken).